A 351-amino-acid chain; its full sequence is Cytochrome c biogenesis protein CcsA (351 aa).

Helical transmembrane passes span 17-37, 38-58, 68-88, 97-117, 143-163, 259-279, 286-306, and 320-340; these read VLFLTMLLYWIGAAFPGLPAI, NALGTAGMAIANLSIATLLGA, LSNLYESLFFLSWGITTVHLI, LVGVFTTPVAMGIVAFATLTL, MMLSYSALMVGSLLAIAFLVI, IIGLGFPLLTIGIIAGAVWAN, WSWDPKETWALITWLVFAAYL, and AILAASGFVVVWICYLGVNLL.

The protein belongs to the CcmF/CycK/Ccl1/NrfE/CcsA family. In terms of assembly, may interact with ccs1.

Its subcellular location is the cellular thylakoid membrane. Its function is as follows. Required during biogenesis of c-type cytochromes (cytochrome c6 and cytochrome f) at the step of heme attachment. This chain is Cytochrome c biogenesis protein CcsA, found in Trichormus variabilis (strain ATCC 29413 / PCC 7937) (Anabaena variabilis).